The primary structure comprises 365 residues: Ubiquitin carboxyl-terminal hydrolase 4 (365 aa).

The N-myristoyl glycine moiety is linked to residue Gly2. The USP domain maps to Phe23 to Leu362. Cys32 acts as the Nucleophile in catalysis. Residues Lys81–Lys98 carry the Bipartite nuclear localization signal motif. The Proton acceptor role is filled by His310.

The protein belongs to the peptidase C19 family. In terms of tissue distribution, constitutively and ubiquitously expressed.

The protein resides in the nucleus. It catalyses the reaction Thiol-dependent hydrolysis of ester, thioester, amide, peptide and isopeptide bonds formed by the C-terminal Gly of ubiquitin (a 76-residue protein attached to proteins as an intracellular targeting signal).. Functionally, recognizes and hydrolyzes the peptide bond at the C-terminal Gly of ubiquitin. Involved in the processing of poly-ubiquitin precursors as well as that of ubiquitinated proteins. Required for the correct development of pollen. This chain is Ubiquitin carboxyl-terminal hydrolase 4 (UBP4), found in Arabidopsis thaliana (Mouse-ear cress).